We begin with the raw amino-acid sequence, 243 residues long: Venom nerve growth factor (243 aa).

Residues 1–18 form the signal peptide; that stretch reads MSMLCYTLIIAFLIGIWA. Positions 19–125 are excised as a propeptide; sequence APKSEDNVPL…TLNRNIRTKR (107 aa). The tract at residues 45 to 66 is disordered; that stretch reads HEGLKTSRNTDQRHLAPKKAED. The span at 46–66 shows a compositional bias: basic and acidic residues; that stretch reads EGLKTSRNTDQRHLAPKKAED. 3 disulfide bridges follow: Cys139–Cys204, Cys182–Cys232, and Cys192–Cys234. N-linked (GlcNAc...) asparagine glycosylation is present at Asn148.

This sequence belongs to the NGF-beta family. As to quaternary structure, homodimer; non-covalently linked. In terms of tissue distribution, expressed by the venom gland.

It is found in the secreted. Functionally, nerve growth factor is important for the development and maintenance of the sympathetic and sensory nervous systems. It stimulates division and differentiation of sympathetic and embryonic sensory neurons as well as basal forebrain cholinergic neurons in the brain. Its relevance in the snake venom is not clear. However, it has been shown to inhibit metalloproteinase-dependent proteolysis of platelet glycoprotein Ib alpha, suggesting a metalloproteinase inhibition to prevent metalloprotease autodigestion and/or protection against prey proteases. Binds a lipid between the two protein chains in the homodimer. The lipid-bound form promotes histamine relase from mouse mast cells, contrary to the lipid-free form. The chain is Venom nerve growth factor from Cryptophis nigrescens (Eastern small-eyed snake).